The sequence spans 97 residues: Co-chaperonin GroES (97 aa).

It belongs to the GroES chaperonin family. In terms of assembly, heptamer of 7 subunits arranged in a ring. Interacts with the chaperonin GroEL.

The protein resides in the cytoplasm. Together with the chaperonin GroEL, plays an essential role in assisting protein folding. The GroEL-GroES system forms a nano-cage that allows encapsulation of the non-native substrate proteins and provides a physical environment optimized to promote and accelerate protein folding. GroES binds to the apical surface of the GroEL ring, thereby capping the opening of the GroEL channel. The protein is Co-chaperonin GroES of Oleispira antarctica.